Here is a 136-residue protein sequence, read N- to C-terminus: Piercer of microtubule wall 1 protein (136 aa).

The interval Met1 to Thr24 is disordered.

Belongs to the PIERCE1 family. In terms of assembly, microtubule inner protein component of sperm flagellar doublet microtubules. Interacts with CFAP53, ODAD1 and ODAD3; the interactions link the outer dynein arms docking complex (ODA-DC) to the internal microtubule inner proteins (MIP) in cilium axoneme. Expressed in airway epithelial cells.

Its subcellular location is the cytoplasm. The protein resides in the cytoskeleton. It is found in the cilium axoneme. It localises to the flagellum axoneme. Functionally, microtubule inner protein involved in the attachment of outer dynein arms (ODAs) to dynein-decorated doublet microtubules (DMTs) in cilia axoneme, which is required for motile cilia beating. Functions at the initial step of left-right asymmetry specification of the visceral organs. The sequence is that of Piercer of microtubule wall 1 protein from Homo sapiens (Human).